The following is a 423-amino-acid chain: UDP-N-acetylglucosamine 1-carboxyvinyltransferase (423 aa).

22 to 23 (KN) contacts phosphoenolpyruvate. Arginine 98 provides a ligand contact to UDP-N-acetyl-alpha-D-glucosamine. Cysteine 122 functions as the Proton donor in the catalytic mechanism. Cysteine 122 carries the post-translational modification 2-(S-cysteinyl)pyruvic acid O-phosphothioketal. Residues 127-131 (RPVDQ), aspartate 311, and isoleucine 333 contribute to the UDP-N-acetyl-alpha-D-glucosamine site.

Belongs to the EPSP synthase family. MurA subfamily.

It localises to the cytoplasm. The enzyme catalyses phosphoenolpyruvate + UDP-N-acetyl-alpha-D-glucosamine = UDP-N-acetyl-3-O-(1-carboxyvinyl)-alpha-D-glucosamine + phosphate. It functions in the pathway cell wall biogenesis; peptidoglycan biosynthesis. Cell wall formation. Adds enolpyruvyl to UDP-N-acetylglucosamine. The sequence is that of UDP-N-acetylglucosamine 1-carboxyvinyltransferase from Stenotrophomonas maltophilia (strain K279a).